We begin with the raw amino-acid sequence, 671 residues long: Chitin biosynthesis protein CHS5 (671 aa).

Residues 78-168 (KPESPVLKIV…EKVILRTHKM (91 aa)) form the Fibronectin type-III domain. Residues 166–262 (HKMTDMSGIT…RIVGVRGFYL (97 aa)) enclose the BRCT domain. A disordered region spans residues 280 to 671 (EELSYSKENE…KKNKKKGKKK (392 aa)). Position 305 is a phosphothreonine (Thr-305). The segment covering 311–321 (ASPNDNESNPS) has biased composition (polar residues). The segment covering 322-332 (EAKEQGEKSGH) has biased composition (basic and acidic residues). Ser-338, Ser-362, Ser-365, Ser-383, and Ser-384 each carry phosphoserine. The segment covering 349-365 (ALENETTIETVNPSVRS) has biased composition (polar residues). Residues 409–419 (KSEDTDTHSNE) show a composition bias toward basic and acidic residues. Residues 434–443 (NNITTESAGE) show a composition bias toward polar residues. Positions 461–486 (EIETPEVNESIEDANEPAEDSNEPVE) are enriched in acidic residues. Residues 487–521 (DSNKPVKDSNKPVEDSNKPVEDSNKPVEDSNKPVE) are compositionally biased toward basic and acidic residues. Positions 522 to 538 (DANEPVEDTSEPVEDAG) are enriched in acidic residues. The span at 542–551 (QETNEFTTDI) shows a compositional bias: polar residues. Phosphoserine is present on residues Ser-573 and Ser-579. A compositionally biased stretch (basic and acidic residues) spans 581-591 (EDVKPEEKGSE). Residue Lys-584 forms a Glycyl lysine isopeptide (Lys-Gly) (interchain with G-Cter in ubiquitin) linkage. Residue Ser-590 is modified to Phosphoserine. Positions 606–620 (GESTTHQKTEASASL) are enriched in polar residues. Residues 627–638 (EEQETTEAEVNT) show a composition bias toward acidic residues. The segment covering 657–671 (NKKKNKKNKKKGKKK) has biased composition (basic residues).

It belongs to the CHS5 family. As to quaternary structure, component of the CHS5/6 complex composed of the 4 CHAPS proteins BCH1, BCH2, BUD7, and CHS6 as well as at least CHS5 and GTP-bound ARF1. The complex interacts with the cargo protein CHS3.

Its subcellular location is the golgi apparatus. The protein localises to the trans-Golgi network membrane. Its function is as follows. Component of the CHS5/6 complex which mediates export of specific cargo proteins, including chitin synthase CHS3. Also involved in targeting FUS1 to sites of polarized growth. In Saccharomyces cerevisiae (strain ATCC 204508 / S288c) (Baker's yeast), this protein is Chitin biosynthesis protein CHS5 (CHS5).